The following is a 630-amino-acid chain: tRNA uridine 5-carboxymethylaminomethyl modification enzyme MnmG (630 aa).

Position 15 to 20 (15 to 20 (GAGHAG)) interacts with FAD. NAD(+) is bound at residue 274 to 288 (GPRYCPSIEDKIVRF).

It belongs to the MnmG family. As to quaternary structure, homodimer. Heterotetramer of two MnmE and two MnmG subunits. Requires FAD as cofactor.

It localises to the cytoplasm. Its function is as follows. NAD-binding protein involved in the addition of a carboxymethylaminomethyl (cmnm) group at the wobble position (U34) of certain tRNAs, forming tRNA-cmnm(5)s(2)U34. The chain is tRNA uridine 5-carboxymethylaminomethyl modification enzyme MnmG from Alkaliphilus oremlandii (strain OhILAs) (Clostridium oremlandii (strain OhILAs)).